The chain runs to 158 residues: UPF0336 protein Mb0654 (158 aa).

This sequence belongs to the UPF0336 family.

In Mycobacterium bovis (strain ATCC BAA-935 / AF2122/97), this protein is UPF0336 protein Mb0654.